We begin with the raw amino-acid sequence, 382 residues long: Threonine synthase (382 aa).

Residue lysine 93 is modified to N6-(pyridoxal phosphate)lysine. Residues asparagine 119, glycine 219 to asparagine 223, and threonine 347 each bind pyridoxal 5'-phosphate.

It belongs to the threonine synthase family. The cofactor is pyridoxal 5'-phosphate.

The catalysed reaction is O-phospho-L-homoserine + H2O = L-threonine + phosphate. It functions in the pathway amino-acid biosynthesis; L-threonine biosynthesis; L-threonine from L-aspartate: step 5/5. Its function is as follows. Catalyzes the gamma-elimination of phosphate from L-phosphohomoserine and the beta-addition of water to produce L-threonine. This chain is Threonine synthase (thrC), found in Synechocystis sp. (strain ATCC 27184 / PCC 6803 / Kazusa).